Here is a 681-residue protein sequence, read N- to C-terminus: UvrABC system protein B (681 aa).

The Helicase ATP-binding domain maps to 32 to 419; the sequence is ARLSRGERDV…GGEYVEQVIR (388 aa). 45-52 provides a ligand contact to ATP; that stretch reads GATGTGKS. Positions 98 to 121 match the Beta-hairpin motif; that stretch reads YYDYYQPEAYIAQTDTYIEKDSSI. A Helicase C-terminal domain is found at 436–602; that stretch reads QIDDLIHEIK…PLRKKIADIL (167 aa). The segment covering 607-616 has biased composition (polar residues); that stretch reads ESKAESTAPS. Positions 607-626 are disordered; that stretch reads ESKAESTAPSSDAVVVSKTN. A UVR domain is found at 636 to 671; it reads RSLIDDLTTQMGTAARELKFELAGRLRDEIAELKKE.

It belongs to the UvrB family. In terms of assembly, forms a heterotetramer with UvrA during the search for lesions. Interacts with UvrC in an incision complex.

It localises to the cytoplasm. Its function is as follows. The UvrABC repair system catalyzes the recognition and processing of DNA lesions. A damage recognition complex composed of 2 UvrA and 2 UvrB subunits scans DNA for abnormalities. Upon binding of the UvrA(2)B(2) complex to a putative damaged site, the DNA wraps around one UvrB monomer. DNA wrap is dependent on ATP binding by UvrB and probably causes local melting of the DNA helix, facilitating insertion of UvrB beta-hairpin between the DNA strands. Then UvrB probes one DNA strand for the presence of a lesion. If a lesion is found the UvrA subunits dissociate and the UvrB-DNA preincision complex is formed. This complex is subsequently bound by UvrC and the second UvrB is released. If no lesion is found, the DNA wraps around the other UvrB subunit that will check the other stand for damage. The chain is UvrABC system protein B from Corynebacterium diphtheriae (strain ATCC 700971 / NCTC 13129 / Biotype gravis).